Here is a 973-residue protein sequence, read N- to C-terminus: Sensor histidine kinase TmoS (973 aa).

The region spanning 32–103 (REELARIIFD…NQKRLVEAAS (72 aa)) is the PAS 1 domain. The 55-residue stretch at 108 to 162 (VRCDIEILGKSGGREVIAVDFSLLPIRDEQENIVFLLAEGRNITDKKKAEAMLAL) folds into the PAC 1 domain. The Histidine kinase 1 domain maps to 187 to 405 (KVSHELRTPL…LFQVKLPLNA (219 aa)). Residue His-190 is modified to Phosphohistidine; by autocatalysis. In terms of domain architecture, Response regulatory spans 452–567 (RVLIVEDNPD…ELRARVSNLI (116 aa)). A 4-aspartylphosphate modification is found at Asp-500. The 71-residue stretch at 611 to 681 (SEARWKAVYE…QRLARLLQSG (71 aa)) folds into the PAS 2 domain. Residues 685-737 (YSVECSYLCKNGSTIWANASVSLMSPRVDEPQVILQIIDDITEKKQAQETLNQ) enclose the PAC 2 domain. A Histidine kinase 2 domain is found at 757-973 (YIAHEINQPL…ACFFVSIPVS (217 aa)). His-760 bears the Phosphohistidine mark.

Autophosphorylated. Activation requires a sequential transfer of a phosphate group from a His in the primary transmitter domain, to an Asp in the receiver domain and to a His in the secondary transmitter domain.

The protein localises to the cytoplasm. It carries out the reaction ATP + protein L-histidine = ADP + protein N-phospho-L-histidine.. Activity is regulated by agonists and antagonists. Binding of agonists such as toluene or benzene to TmoS stimulates autophosphorylation. Toluene causes the most pronounced increase, followed by benzene, chlorobenzene and ethylbenzene. Activity is inhibited by antagonists such as o-xylene, o-chlorotoluene and trimethylbenzene isomers, which bind to TmoS but do not stimulate autophosphorylation. Its function is as follows. Member of the two-component regulatory system TmoS/TmoT involved in the regulation of toluene degradation. Probably phosphorylates TmoT via a four-step phosphorelay in response to toluene. Can also be induced by benzene and ethylbenzene. The polypeptide is Sensor histidine kinase TmoS (tmoS) (Ectopseudomonas mendocina (Pseudomonas mendocina)).